A 372-amino-acid polypeptide reads, in one-letter code: 4-hydroxy-3-methylbut-2-en-1-yl diphosphate synthase (flavodoxin) (372 aa).

Residues Cys-270, Cys-273, Cys-305, and Glu-312 each coordinate [4Fe-4S] cluster.

The protein belongs to the IspG family. It depends on [4Fe-4S] cluster as a cofactor.

It catalyses the reaction (2E)-4-hydroxy-3-methylbut-2-enyl diphosphate + oxidized [flavodoxin] + H2O + 2 H(+) = 2-C-methyl-D-erythritol 2,4-cyclic diphosphate + reduced [flavodoxin]. The protein operates within isoprenoid biosynthesis; isopentenyl diphosphate biosynthesis via DXP pathway; isopentenyl diphosphate from 1-deoxy-D-xylulose 5-phosphate: step 5/6. Its function is as follows. Converts 2C-methyl-D-erythritol 2,4-cyclodiphosphate (ME-2,4cPP) into 1-hydroxy-2-methyl-2-(E)-butenyl 4-diphosphate. The chain is 4-hydroxy-3-methylbut-2-en-1-yl diphosphate synthase (flavodoxin) from Shigella boydii serotype 18 (strain CDC 3083-94 / BS512).